Reading from the N-terminus, the 250-residue chain is MKVSVISLFPEMFQAITQYGVTGRAIKSGLVEVDFFNPRDFTHDRHKTVDDRPYGGGPGMLMKVQPLKDAIASAKLSVPNAKVIYLSPQGRTLTQEGVQQLAKQAEFILVAGRYEGVDERLIQSEIDEEWSIGDFVLSGGELPAMVLMDAVSRMVPGVLGKQASADEDSFSDGLLDCPHYTRPEVLNGEPVPSVLLSGNHEEIRRWRLKQKLARTFQRRPDLLQNLELDKEQQLLLEEFIRETEDSTSAE.

Residues Gly-112 and 132-137 (IGDFVL) contribute to the S-adenosyl-L-methionine site.

Belongs to the RNA methyltransferase TrmD family. Homodimer.

The protein resides in the cytoplasm. It catalyses the reaction guanosine(37) in tRNA + S-adenosyl-L-methionine = N(1)-methylguanosine(37) in tRNA + S-adenosyl-L-homocysteine + H(+). Specifically methylates guanosine-37 in various tRNAs. This is tRNA (guanine-N(1)-)-methyltransferase from Marinomonas sp. (strain MWYL1).